Consider the following 187-residue polypeptide: Photosystem I assembly protein Ycf4 (187 aa).

The next 2 helical transmembrane spans lie at 23 to 43 (INYF…IVGI) and 70 to 90 (FYGI…ILGV).

This sequence belongs to the Ycf4 family.

Its subcellular location is the plastid. The protein resides in the chloroplast thylakoid membrane. Functionally, seems to be required for the assembly of the photosystem I complex. In Chara vulgaris (Common stonewort), this protein is Photosystem I assembly protein Ycf4.